Here is a 942-residue protein sequence, read N- to C-terminus: DNA mismatch repair protein MutS (942 aa).

Glycine 613–serine 620 contacts ATP.

This sequence belongs to the DNA mismatch repair MutS family.

In terms of biological role, this protein is involved in the repair of mismatches in DNA. It is possible that it carries out the mismatch recognition step. This protein has a weak ATPase activity. This chain is DNA mismatch repair protein MutS, found in Clostridium botulinum (strain Eklund 17B / Type B).